Consider the following 882-residue polypeptide: Isoamylase 2, chloroplastic (882 aa).

The N-terminal 70 residues, 1–70 (MAAWSPSVGI…LQSYQFSKIC (70 aa)), are a transit peptide targeting the chloroplast.

Belongs to the glycosyl hydrolase 13 family. Associates with ISA1 to form the heteromultimeric complex Iso1 required for amylopectin synthesis.

The protein resides in the plastid. It localises to the chloroplast. It participates in glycan biosynthesis; starch biosynthesis. Its function is as follows. Involved in the trimming of pre-amylopectin chains. Accelerates the crystallization of nascent amylopectin molecules during starch synthesis. ISA1 and ISA2 work exclusively together as a multimeric holoenzyme. ISA1-ISA2 removes preferentially branches that are very close to other branches. In Arabidopsis thaliana (Mouse-ear cress), this protein is Isoamylase 2, chloroplastic (ISA2).